The chain runs to 190 residues: dCTP deaminase (190 aa).

DCTP-binding positions include 113–118, 137–139, Q158, Y172, and Q182; these read KSTYAR and TLE. The active-site Proton donor/acceptor is the E139.

The protein belongs to the dCTP deaminase family. In terms of assembly, homotrimer.

It carries out the reaction dCTP + H2O + H(+) = dUTP + NH4(+). The protein operates within pyrimidine metabolism; dUMP biosynthesis; dUMP from dCTP (dUTP route): step 1/2. Functionally, catalyzes the deamination of dCTP to dUTP. The polypeptide is dCTP deaminase (Chromobacterium violaceum (strain ATCC 12472 / DSM 30191 / JCM 1249 / CCUG 213 / NBRC 12614 / NCIMB 9131 / NCTC 9757 / MK)).